Consider the following 348-residue polypeptide: Phospho-2-dehydro-3-deoxyheptonate aldolase, Trp-sensitive (348 aa).

It belongs to the class-I DAHP synthase family.

The enzyme catalyses D-erythrose 4-phosphate + phosphoenolpyruvate + H2O = 7-phospho-2-dehydro-3-deoxy-D-arabino-heptonate + phosphate. It functions in the pathway metabolic intermediate biosynthesis; chorismate biosynthesis; chorismate from D-erythrose 4-phosphate and phosphoenolpyruvate: step 1/7. Functionally, stereospecific condensation of phosphoenolpyruvate (PEP) and D-erythrose-4-phosphate (E4P) giving rise to 3-deoxy-D-arabino-heptulosonate-7-phosphate (DAHP). The polypeptide is Phospho-2-dehydro-3-deoxyheptonate aldolase, Trp-sensitive (aroH) (Buchnera aphidicola subsp. Schizaphis graminum (strain Sg)).